Consider the following 912-residue polypeptide: Nonsense-mediated mRNA decay factor SMG8 (912 aa).

The segment at 565-630 (EHSNRTPDAS…GEDEDETLEQ (66 aa)) is disordered. Positions 570–602 (TPDASTHPPMTNENSPHLSGSQKSQDSASNLTF) are enriched in polar residues. A compositionally biased stretch (basic and acidic residues) spans 604-614 (MDEKRDEENKS).

The protein belongs to the SMG8 family.

Functionally, involved in nonsense-mediated decay (NMD) of mRNAs containing premature stop codons. Probable component of kinase complex containing SMG1 and recruited to stalled ribosomes. The chain is Nonsense-mediated mRNA decay factor SMG8 from Culex quinquefasciatus (Southern house mosquito).